Reading from the N-terminus, the 381-residue chain is GDP-mannose transporter (381 aa).

Residues 1-39 (MVESKKTDDYAIEMDKIDQGSKNFEAAAPPQPRSVPSSS) are Cytoplasmic-facing. A helical membrane pass occupies residues 40-60 (LSGNPVLPVLAYCGSSILMTV). At 61–68 (MNKYVLSG) the chain is on the lumenal side. Residues 69–89 (LDFNLNFFLLCVQSIVCIIAI) traverse the membrane as a helical segment. At 90 to 109 (QTCKFCGLITYRDFSADEAK) the chain is on the cytoplasmic side. Residues 110–126 (KWFPISLLLIGMIYTGS) traverse the membrane as a helical segment. Topologically, residues 127 to 133 (KALQFLS) are lumenal. The helical transmembrane segment at 134–150 (IPVYTIFKNLTIILIAY) threads the bilayer. Residues 151-159 (GEVLWFGGS) lie on the Cytoplasmic side of the membrane. The chain crosses the membrane as a helical span at residues 160 to 181 (VTGLTLFSFGLMVLSSIIAAWA). At 182–199 (DIKHAVESSGDTSAQVST) the chain is on the lumenal side. The chain crosses the membrane as a helical span at residues 200 to 220 (LNAGYIWMLINCLCTSSYVLG). Topologically, residues 221–232 (MRKRIKLTNFKD) are cytoplasmic. The chain crosses the membrane as a helical span at residues 233–253 (FDTMFYNNLLSIPVLVVLTGL). Residues 254-273 (MEDWSSANIDRNFPQADRSS) are Lumenal-facing. The chain crosses the membrane as a helical span at residues 274 to 294 (IMFAMILSGLSSVFISYTSAW). The Cytoplasmic portion of the chain corresponds to 295 to 302 (CVRVTSST). The helical transmembrane segment at 303–323 (TYSMVGALNKLPIALSGLIFF) threads the bilayer. Residues 324–326 (DAP) lie on the Lumenal side of the membrane. A helical membrane pass occupies residues 327-347 (VTFPSVSAIAVGFVSGIVYAI). The Cytoplasmic portion of the chain corresponds to 348 to 381 (AKIKQNAKPKTGVLPTSNPLVSASSQSMRDSLRS).

It belongs to the TPT transporter family. SLC35D subfamily. As to quaternary structure, homooligomer.

Its subcellular location is the golgi apparatus membrane. The protein localises to the cytoplasmic vesicle membrane. It is found in the endoplasmic reticulum membrane. Its function is as follows. Involved in the import of GDP-mannose from the cytoplasm into the Golgi lumen. This is GDP-mannose transporter (gmt1) from Aspergillus oryzae (strain ATCC 42149 / RIB 40) (Yellow koji mold).